A 552-amino-acid chain; its full sequence is Probable glucomannan 4-beta-mannosyltransferase 10 (552 aa).

Residues 62–82 (IVPLFKCLVAFCLIISLLVFI) traverse the membrane as a helical segment. Asp-161 is a catalytic residue. The substrate site is built by Asp-220 and Asp-222. The active site involves Asp-314. 4 consecutive transmembrane segments (helical) span residues 393-413 (IIVHCFTFIFYCVILPTSVFF), 430-450 (ITLCIVIATPRSFYLVIFWIL), 509-529 (EIMVGIYILCCACYGLFFGNT), and 530-550 (LLYLYLFMQAVAFLISGVGFV).

Belongs to the glycosyltransferase 2 family. Plant cellulose synthase-like A subfamily.

It is found in the golgi apparatus membrane. It catalyses the reaction GDP-mannose + (glucomannan)n = GDP + (glucomannan)n+1.. Its function is as follows. Probable mannan synthase which consists of a 4-beta-mannosyltransferase activity on mannan using GDP-mannose. The beta-1,4-mannan product is the backbone for galactomannan synthesis by galactomannan galactosyltransferase. Galactomannan is a noncellulosic polysaccharides of plant cell wall. The chain is Probable glucomannan 4-beta-mannosyltransferase 10 from Arabidopsis thaliana (Mouse-ear cress).